The primary structure comprises 1038 residues: Bone morphogenetic protein receptor type-2 (1038 aa).

A signal peptide spans 1 to 26; it reads MTSSLHRPFRVPWLLWAVLLVSTTAA. Topologically, residues 27–150 are extracellular; the sequence is SQNQERLCAF…PPHSFNRDET (124 aa). Cystine bridges form between Cys34–Cys66, Cys60–Cys84, Cys94–Cys117, Cys99–Cys116, and Cys118–Cys123. Asn55 is a glycosylation site (N-linked (GlcNAc...) asparagine). N-linked (GlcNAc...) asparagine glycosylation is present at Asn110. Residue Asn126 is glycosylated (N-linked (GlcNAc...) asparagine). Residues 151 to 171 form a helical membrane-spanning segment; sequence IIIALASVSVLAVLIVALCFG. At 172–1038 the chain is on the cytoplasmic side; that stretch reads YRMLTGDRKQ…VSKDIGMNCL (867 aa). One can recognise a Protein kinase domain in the interval 203–504; sequence LKLLELIGRG…QCAEERMAEL (302 aa). ATP contacts are provided by residues 209–217, Lys230, and 280–282; these read IGRGRYGAV and EYY. Asp333 (proton acceptor) is an active-site residue. ATP is bound by residues 337-338 and Asp351; that span reads RN. Thr379 carries the post-translational modification Phosphothreonine. A Phosphoserine modification is found at Ser586. The segment at 593-626 is disordered; sequence QAQARIPSPETSVTSLSTNTTTTNTTGLTPSTGM. Positions 603 to 626 are enriched in low complexity; sequence TSVTSLSTNTTTTNTTGLTPSTGM. A phosphoserine mark is found at Ser680 and Ser681. The tract at residues 746–769 is disordered; it reads PKQQNLPKRPTSLPLNTKNSTKEP. Phosphoserine is present on Ser843. The segment covering 872-896 has biased composition (basic and acidic residues); it reads RREQQAGHDEGVLDRLVDRRERPLE. Residues 872–974 form a disordered region; sequence RREQQAGHDE…SGSGEKIKRR (103 aa). Polar residues-rich tracts occupy residues 909 to 924 and 937 to 964; these read PCSE…TSTA and RPNS…QDGK.

The protein belongs to the protein kinase superfamily. TKL Ser/Thr protein kinase family. TGFB receptor subfamily. In terms of assembly, interacts with GDF5. Interacts with BMP4. Interacts with SCUBE3. Interacts with TSC22D1/TSC-22. Interacts with activin A/INHBA. It depends on Mg(2+) as a cofactor. Mn(2+) serves as cofactor.

The protein resides in the cell membrane. The enzyme catalyses L-threonyl-[receptor-protein] + ATP = O-phospho-L-threonyl-[receptor-protein] + ADP + H(+). It carries out the reaction L-seryl-[receptor-protein] + ATP = O-phospho-L-seryl-[receptor-protein] + ADP + H(+). Its function is as follows. On ligand binding, forms a receptor complex consisting of two type II and two type I transmembrane serine/threonine kinases. Type II receptors phosphorylate and activate type I receptors which autophosphorylate, then bind and activate SMAD transcriptional regulators. Can also mediate signaling through the activation of the p38MAPK cascade. Binds to BMP7, BMP2 and, less efficiently, BMP4. Binding is weak but enhanced by the presence of type I receptors for BMPs. Mediates induction of adipogenesis by GDF6. Promotes signaling also by binding to activin A/INHBA. This Mus musculus (Mouse) protein is Bone morphogenetic protein receptor type-2 (Bmpr2).